The chain runs to 82 residues: MAFTLYTLLQAALLCVNAVAVLHEERFLSKIGWGVDHGIGGFGEEPGMKSQLMNLIRSVRTVMRVPLIIVNSVTIVLLLLFG.

2 helical membrane-spanning segments follow: residues 2–22 (AFTLYTLLQAALLCVNAVAVL) and 62–82 (VMRVPLIIVNSVTIVLLLLFG).

The protein belongs to the YOS1 family.

Its subcellular location is the endoplasmic reticulum membrane. Regulator of endoplasmic reticulum secretion that acts as a key determinant of brain size. Required for secretion of extracellular matrix proteins. Required for correct brain development by depositing sufficient extracellular matrix proteins for tissue integrity and the proliferation of neural progenitors. Acts as a regulator of the unfolded protein response (UPR). The chain is Immediate early response 3-interacting protein 1 from Xenopus laevis (African clawed frog).